Here is a 207-residue protein sequence, read N- to C-terminus: Thiamine-phosphate synthase (207 aa).

4-amino-2-methyl-5-(diphosphooxymethyl)pyrimidine is bound by residues 36–40 (QLRMK) and Asn-68. Positions 69 and 88 each coordinate Mg(2+). A 4-amino-2-methyl-5-(diphosphooxymethyl)pyrimidine-binding site is contributed by Ser-106. 132-134 (TNT) contacts 2-[(2R,5Z)-2-carboxy-4-methylthiazol-5(2H)-ylidene]ethyl phosphate. Residue Lys-135 coordinates 4-amino-2-methyl-5-(diphosphooxymethyl)pyrimidine. Residues Gly-162 and 182 to 183 (VS) each bind 2-[(2R,5Z)-2-carboxy-4-methylthiazol-5(2H)-ylidene]ethyl phosphate.

It belongs to the thiamine-phosphate synthase family. Mg(2+) is required as a cofactor.

The enzyme catalyses 2-[(2R,5Z)-2-carboxy-4-methylthiazol-5(2H)-ylidene]ethyl phosphate + 4-amino-2-methyl-5-(diphosphooxymethyl)pyrimidine + 2 H(+) = thiamine phosphate + CO2 + diphosphate. It carries out the reaction 2-(2-carboxy-4-methylthiazol-5-yl)ethyl phosphate + 4-amino-2-methyl-5-(diphosphooxymethyl)pyrimidine + 2 H(+) = thiamine phosphate + CO2 + diphosphate. It catalyses the reaction 4-methyl-5-(2-phosphooxyethyl)-thiazole + 4-amino-2-methyl-5-(diphosphooxymethyl)pyrimidine + H(+) = thiamine phosphate + diphosphate. The protein operates within cofactor biosynthesis; thiamine diphosphate biosynthesis; thiamine phosphate from 4-amino-2-methyl-5-diphosphomethylpyrimidine and 4-methyl-5-(2-phosphoethyl)-thiazole: step 1/1. Functionally, condenses 4-methyl-5-(beta-hydroxyethyl)thiazole monophosphate (THZ-P) and 2-methyl-4-amino-5-hydroxymethyl pyrimidine pyrophosphate (HMP-PP) to form thiamine monophosphate (TMP). In Methanococcus maripaludis (strain C7 / ATCC BAA-1331), this protein is Thiamine-phosphate synthase.